The primary structure comprises 228 residues: LexA repressor (228 aa).

Residues 26–46 (FDEMKDALDLRSKSGIHRLIT) constitute a DNA-binding region (H-T-H motif). Catalysis depends on for autocatalytic cleavage activity residues Ser149 and Lys187.

Belongs to the peptidase S24 family. Homodimer.

The enzyme catalyses Hydrolysis of Ala-|-Gly bond in repressor LexA.. Its function is as follows. Represses a number of genes involved in the response to DNA damage (SOS response), including recA and lexA. Has been shown to bind to the direct repeat sequence 5'-GTT-N(7)-GTTC-3'. In the presence of single-stranded DNA, RecA interacts with LexA causing an autocatalytic cleavage which disrupts the DNA-binding part of LexA, leading to derepression of the SOS regulon and eventually DNA repair. This Cereibacter sphaeroides (strain ATCC 17023 / DSM 158 / JCM 6121 / CCUG 31486 / LMG 2827 / NBRC 12203 / NCIMB 8253 / ATH 2.4.1.) (Rhodobacter sphaeroides) protein is LexA repressor.